The sequence spans 415 residues: Gamma-glutamyl phosphate reductase (415 aa).

It belongs to the gamma-glutamyl phosphate reductase family.

The protein localises to the cytoplasm. It carries out the reaction L-glutamate 5-semialdehyde + phosphate + NADP(+) = L-glutamyl 5-phosphate + NADPH + H(+). The protein operates within amino-acid biosynthesis; L-proline biosynthesis; L-glutamate 5-semialdehyde from L-glutamate: step 2/2. In terms of biological role, catalyzes the NADPH-dependent reduction of L-glutamate 5-phosphate into L-glutamate 5-semialdehyde and phosphate. The product spontaneously undergoes cyclization to form 1-pyrroline-5-carboxylate. The chain is Gamma-glutamyl phosphate reductase from Bacillus mycoides (strain KBAB4) (Bacillus weihenstephanensis).